A 35-amino-acid chain; its full sequence is MISEYGVVVIADRDESSWDFVEKRIDFSEFPLIES.

This is an uncharacterized protein from Archaeoglobus fulgidus (strain ATCC 49558 / DSM 4304 / JCM 9628 / NBRC 100126 / VC-16).